Reading from the N-terminus, the 67-residue chain is Small ribosomal subunit protein eS17 (67 aa).

The protein belongs to the eukaryotic ribosomal protein eS17 family.

In Pyrococcus horikoshii (strain ATCC 700860 / DSM 12428 / JCM 9974 / NBRC 100139 / OT-3), this protein is Small ribosomal subunit protein eS17.